The primary structure comprises 80 residues: U6 snRNA-associated Sm-like protein LSm6 (80 aa).

Positions 7-79 (TPSDFLKQII…VLYISTQKRR (73 aa)) constitute a Sm domain. Position 59 is an N6-acetyllysine (Lys59).

Belongs to the snRNP Sm proteins family. SmF/LSm6 subfamily. In terms of assembly, component of the precatalytic spliceosome (spliceosome B complex). Component of the U4/U6-U5 tri-snRNP complex, a building block of the precatalytic spliceosome (spliceosome B complex). The U4/U6-U5 tri-snRNP complex is composed of the U4, U6 and U5 snRNAs and at least PRPF3, PRPF4, PRPF6, PRPF8, PRPF31, SNRNP200, TXNL4A, SNRNP40, SNRPB, SNRPD1, SNRPD2, SNRPD3, SNRPE, SNRPF, SNRPG, DDX23, CD2BP2, PPIH, SNU13, EFTUD2, SART1 and USP39, plus LSM2, LSM3, LSM4, LSM5, LSM6, LSM7 and LSM8. LSM2, LSM3, LSM4, LSM5, LSM6, LSM7 and LSM8 form a heptameric, ring-shaped subcomplex (the LSM2-8 complex) that is part of the U4/U6-U5 tri-snRNP complex and the precatalytic spliceosome. Component of the heptameric LSM1-LSM7 complex, which consists of LSM1, LSM2, LSM3, LSM4, LSM5, LSM6 and LSM7.

Its subcellular location is the cytoplasm. It is found in the nucleus. In terms of biological role, plays a role in pre-mRNA splicing as component of the U4/U6-U5 tri-snRNP complex that is involved in spliceosome assembly, and as component of the precatalytic spliceosome (spliceosome B complex). The heptameric LSM2-8 complex binds specifically to the 3'-terminal U-tract of U6 snRNA. Component of LSm protein complexes, which are involved in RNA processing and may function in a chaperone-like manner, facilitating the efficient association of RNA processing factors with their substrates. Component of the cytoplasmic LSM1-LSM7 complex, which is thought to be involved in mRNA degradation by activating the decapping step in the 5'-to-3' mRNA decay pathway. The polypeptide is U6 snRNA-associated Sm-like protein LSm6 (LSM6) (Homo sapiens (Human)).